We begin with the raw amino-acid sequence, 423 residues long: Diaminobutyrate--2-oxoglutarate transaminase (423 aa).

Lys-267 bears the N6-(pyridoxal phosphate)lysine mark.

Belongs to the class-III pyridoxal-phosphate-dependent aminotransferase family. Homohexamer. The cofactor is pyridoxal 5'-phosphate.

The enzyme catalyses L-2,4-diaminobutanoate + 2-oxoglutarate = L-aspartate 4-semialdehyde + L-glutamate. The protein operates within amine and polyamine biosynthesis; ectoine biosynthesis; L-ectoine from L-aspartate 4-semialdehyde: step 1/3. Catalyzes reversively the conversion of L-aspartate beta-semialdehyde (ASA) to L-2,4-diaminobutyrate (DABA) by transamination with L-glutamate. The chain is Diaminobutyrate--2-oxoglutarate transaminase (ectB) from Chromohalobacter salexigens (strain ATCC BAA-138 / DSM 3043 / CIP 106854 / NCIMB 13768 / 1H11).